Reading from the N-terminus, the 304-residue chain is Pseudouridine-5'-phosphate glycosidase (304 aa).

Glu25 (proton donor) is an active-site residue. Substrate-binding residues include Lys88 and Val108. Mn(2+) is bound at residue Asp140. 142–144 (SAD) contributes to the substrate binding site. Residue Lys161 is the Nucleophile of the active site.

Belongs to the pseudouridine-5'-phosphate glycosidase family. In terms of assembly, homotrimer. Mn(2+) serves as cofactor.

It catalyses the reaction D-ribose 5-phosphate + uracil = psi-UMP + H2O. In terms of biological role, catalyzes the reversible cleavage of pseudouridine 5'-phosphate (PsiMP) to ribose 5-phosphate and uracil. Functions biologically in the cleavage direction, as part of a pseudouridine degradation pathway. This chain is Pseudouridine-5'-phosphate glycosidase, found in Paracoccus denitrificans (strain Pd 1222).